The sequence spans 80 residues: Small ribosomal subunit protein uS17 (80 aa).

The protein belongs to the universal ribosomal protein uS17 family. In terms of assembly, part of the 30S ribosomal subunit.

Its function is as follows. One of the primary rRNA binding proteins, it binds specifically to the 5'-end of 16S ribosomal RNA. The protein is Small ribosomal subunit protein uS17 of Microcystis aeruginosa (strain NIES-843 / IAM M-2473).